We begin with the raw amino-acid sequence, 394 residues long: Putative transporter AraJ (394 aa).

Topologically, residues 1–4 are cytoplasmic; it reads MKKV. Residues 5 to 27 form a helical membrane-spanning segment; sequence ILSLALGTFGLGMAEFGIMGVLT. Residues 28–41 lie on the Periplasmic side of the membrane; that stretch reads ELAHNVGISIPAAG. The helical transmembrane segment at 42-63 threads the bilayer; that stretch reads HMISYYALGVVVGAPIIALFSS. At 64-69 the chain is on the cytoplasmic side; sequence RYSLKH. A helical membrane pass occupies residues 70–89; sequence ILLFLVALCVIGNAMFTLSS. The Periplasmic portion of the chain corresponds to 90–93; the sequence is SYLM. The chain crosses the membrane as a helical span at residues 94–116; the sequence is LAIGRLVSGFPHGAFFGVGAIVL. Residues 117 to 128 are Cytoplasmic-facing; the sequence is SKIIKPGKVTAA. Residues 129–151 traverse the membrane as a helical segment; the sequence is VAGMVSGMTVANLLGIPLGTYLS. Residues 152-155 lie on the Periplasmic side of the membrane; sequence QEFS. The helical transmembrane segment at 156–178 threads the bilayer; the sequence is WRYTFLLIAVFNIAVMASVYFWV. Residues 179–198 are Cytoplasmic-facing; sequence PDIRDEAKGNLREQFHFLRS. A helical membrane pass occupies residues 199–221; the sequence is PAPWLIFAATMFGNAGVFAWFSY. The Periplasmic portion of the chain corresponds to 222–235; it reads VKPYMMFISGFSET. A helical transmembrane segment spans residues 236 to 255; the sequence is AMTFIMMLVGLGMVLGNMLS. Over 256 to 261 the chain is Cytoplasmic; that stretch reads GRISGR. The helical transmembrane segment at 262–284 threads the bilayer; the sequence is YSPLRIAAVTDFIIVLALLMLFF. Residues 285 to 293 lie on the Periplasmic side of the membrane; that stretch reads CGGMKTTSL. Residues 294–316 form a helical membrane-spanning segment; that stretch reads IFAFICCAGLFALSAPLQILLLQ. Residues 317-322 lie on the Cytoplasmic side of the membrane; it reads NAKGGE. A helical membrane pass occupies residues 323–342; that stretch reads LLGAAGGQIAFNLGSAVGAY. The Periplasmic portion of the chain corresponds to 343 to 351; sequence CGGMMLTLG. Residues 352–374 traverse the membrane as a helical segment; the sequence is LAYNYVALPAALLSFAAMSSLLL. Topologically, residues 375-394 are cytoplasmic; that stretch reads YGRYKRQQAADTPVLAKPLG.

This sequence belongs to the major facilitator superfamily.

The protein resides in the cell inner membrane. Its function is as follows. May be involved in either the transport or processing of arabinose polymers. This chain is Putative transporter AraJ (araJ), found in Escherichia coli (strain K12).